Here is a 332-residue protein sequence, read N- to C-terminus: Delta-aminolevulinic acid dehydratase (332 aa).

Lys-199 serves as the catalytic Schiff-base intermediate with substrate. 2 residues coordinate 5-aminolevulinate: Arg-209 and Lys-221. Residue Glu-237 participates in Mg(2+) binding. Residue Lys-252 is the Schiff-base intermediate with substrate of the active site. 2 residues coordinate 5-aminolevulinate: Ser-278 and Tyr-317.

Belongs to the ALAD family. In terms of assembly, homooctamer.

It carries out the reaction 2 5-aminolevulinate = porphobilinogen + 2 H2O + H(+). The protein operates within porphyrin-containing compound metabolism; protoporphyrin-IX biosynthesis; coproporphyrinogen-III from 5-aminolevulinate: step 1/4. In terms of biological role, catalyzes an early step in the biosynthesis of tetrapyrroles. Binds two molecules of 5-aminolevulinate per subunit, each at a distinct site, and catalyzes their condensation to form porphobilinogen. This Chlamydia pneumoniae (Chlamydophila pneumoniae) protein is Delta-aminolevulinic acid dehydratase (hemB).